A 757-amino-acid polypeptide reads, in one-letter code: Maltose phosphorylase (757 aa).

Position 354-355 (354-355 (WD)) interacts with substrate. Glu-483 acts as the Proton donor in catalysis. 588–589 (KQ) serves as a coordination point for substrate.

It belongs to the glycosyl hydrolase 65 family.

The catalysed reaction is D-maltose + phosphate = beta-D-glucose 1-phosphate + D-glucose. Its pathway is glycan degradation; maltose degradation. Functionally, catalyzes the phosphorolysis of maltose, leading to the formation of glucose and glucose 1-P. The sequence is that of Maltose phosphorylase (mdxK) from Bacillus subtilis (strain 168).